The following is a 402-amino-acid chain: Subtilisin-like protease 9 (402 aa).

The signal sequence occupies residues 1 to 20; that stretch reads MGFFRQLFSLSLCALSLAIP. Residues 21–120 constitute a propeptide that is removed on maturation; that stretch reads SKLIGLENTQ…VEVDRVVKLD (100 aa). The region spanning 36–119 is the Inhibitor I9 domain; sequence SYIVVMKSTI…YVEVDRVVKL (84 aa). In terms of domain architecture, Peptidase S8 spans 130-402; it reads SWGLGRISHK…RKLLYNGSGA (273 aa). Active-site charge relay system residues include Asp162 and His193. Asn254 carries N-linked (GlcNAc...) asparagine glycosylation. Ser348 serves as the catalytic Charge relay system. N-linked (GlcNAc...) asparagine glycosylation is found at Asn390 and Asn398.

It belongs to the peptidase S8 family.

It localises to the secreted. Secreted subtilisin-like serine protease with keratinolytic activity that contributes to pathogenicity. The polypeptide is Subtilisin-like protease 9 (SUB9) (Arthroderma benhamiae (strain ATCC MYA-4681 / CBS 112371) (Trichophyton mentagrophytes)).